Consider the following 75-residue polypeptide: Small ribosomal subunit protein bS18 (75 aa).

This sequence belongs to the bacterial ribosomal protein bS18 family. Part of the 30S ribosomal subunit. Forms a tight heterodimer with protein bS6.

Binds as a heterodimer with protein bS6 to the central domain of the 16S rRNA, where it helps stabilize the platform of the 30S subunit. The polypeptide is Small ribosomal subunit protein bS18 (Pasteurella multocida (strain Pm70)).